The following is a 212-amino-acid chain: ATP-dependent dethiobiotin synthetase BioD (212 aa).

13–18 serves as a coordination point for ATP; the sequence is GIGKTV. Residue T17 participates in Mg(2+) binding. Residue K33 is part of the active site. Position 37 (S37) interacts with substrate. Position 100 (E100) interacts with Mg(2+). Residues 100 to 103 and 184 to 186 each bind ATP; these read EGAG and PLL.

This sequence belongs to the dethiobiotin synthetase family. Homodimer. Mg(2+) serves as cofactor.

The protein localises to the cytoplasm. It catalyses the reaction (7R,8S)-7,8-diammoniononanoate + CO2 + ATP = (4R,5S)-dethiobiotin + ADP + phosphate + 3 H(+). The protein operates within cofactor biosynthesis; biotin biosynthesis; biotin from 7,8-diaminononanoate: step 1/2. In terms of biological role, catalyzes a mechanistically unusual reaction, the ATP-dependent insertion of CO2 between the N7 and N8 nitrogen atoms of 7,8-diaminopelargonic acid (DAPA, also called 7,8-diammoniononanoate) to form a ureido ring. The protein is ATP-dependent dethiobiotin synthetase BioD of Brucella canis (strain ATCC 23365 / NCTC 10854 / RM-666).